Reading from the N-terminus, the 212-residue chain is Uracil phosphoribosyltransferase (212 aa).

Residues Arg78, Arg103, and 130 to 138 contribute to the 5-phospho-alpha-D-ribose 1-diphosphate site; that span reads DPMLATGGS. Uracil is bound by residues Ile193 and 198 to 200; that span reads GDA. Residue Asp199 participates in 5-phospho-alpha-D-ribose 1-diphosphate binding.

This sequence belongs to the UPRTase family. The cofactor is Mg(2+).

The catalysed reaction is UMP + diphosphate = 5-phospho-alpha-D-ribose 1-diphosphate + uracil. It participates in pyrimidine metabolism; UMP biosynthesis via salvage pathway; UMP from uracil: step 1/1. With respect to regulation, allosterically activated by GTP. In terms of biological role, catalyzes the conversion of uracil and 5-phospho-alpha-D-ribose 1-diphosphate (PRPP) to UMP and diphosphate. In Pseudomonas aeruginosa (strain LESB58), this protein is Uracil phosphoribosyltransferase.